Here is a 510-residue protein sequence, read N- to C-terminus: Glycogen synthase (510 aa).

Lys-18 lines the ADP-alpha-D-glucose pocket.

It belongs to the glycosyltransferase 1 family. Bacterial/plant glycogen synthase subfamily.

The catalysed reaction is [(1-&gt;4)-alpha-D-glucosyl](n) + ADP-alpha-D-glucose = [(1-&gt;4)-alpha-D-glucosyl](n+1) + ADP + H(+). It functions in the pathway glycan biosynthesis; glycogen biosynthesis. Its function is as follows. Synthesizes alpha-1,4-glucan chains using ADP-glucose. The polypeptide is Glycogen synthase (Bordetella bronchiseptica (strain ATCC BAA-588 / NCTC 13252 / RB50) (Alcaligenes bronchisepticus)).